The following is a 131-amino-acid chain: Profilin-4 (131 aa).

This sequence belongs to the profilin family. As to quaternary structure, occurs in many kinds of cells as a complex with monomeric actin in a 1:1 ratio.

Its subcellular location is the cytoplasm. The protein localises to the cytoskeleton. Binds to actin and affects the structure of the cytoskeleton. At high concentrations, profilin prevents the polymerization of actin, whereas it enhances it at low concentrations. By binding to PIP2, it inhibits the formation of IP3 and DG. The protein is Profilin-4 of Hevea brasiliensis (Para rubber tree).